Reading from the N-terminus, the 207-residue chain is Vexin (207 aa).

The tract at residues 55–102 (LELLPHRGDRRDPGDGRRFGRLQTARPPTAHPAKASARPVGISEPKTS) is disordered. Basic and acidic residues predominate over residues 58–72 (LPHRGDRRDPGDGRR).

It belongs to the vexin family.

The protein localises to the cell membrane. The protein resides in the nucleus. Required for neurogenesis in the neural plate and retina. Strongly cooperates with neural bHLH factors to promote neurogenesis. The polypeptide is Vexin (Pongo abelii (Sumatran orangutan)).